We begin with the raw amino-acid sequence, 156 residues long: uncharacterized protein (156 aa).

This is an uncharacterized protein from Haemophilus influenzae (strain ATCC 51907 / DSM 11121 / KW20 / Rd).